Consider the following 520-residue polypeptide: Peptide chain release factor 3 (520 aa).

Positions 8–277 constitute a tr-type G domain; it reads ESRKTFAIIS…HAPMPNARQT (270 aa). Residues 17 to 24, 85 to 89, and 139 to 142 each bind GTP; these read SHPDAGKT, DTPGH, and NKLD.

Belongs to the TRAFAC class translation factor GTPase superfamily. Classic translation factor GTPase family. PrfC subfamily.

Its subcellular location is the cytoplasm. In terms of biological role, increases the formation of ribosomal termination complexes and stimulates activities of RF-1 and RF-2. It binds guanine nucleotides and has strong preference for UGA stop codons. It may interact directly with the ribosome. The stimulation of RF-1 and RF-2 is significantly reduced by GTP and GDP, but not by GMP. The chain is Peptide chain release factor 3 from Staphylococcus saprophyticus subsp. saprophyticus (strain ATCC 15305 / DSM 20229 / NCIMB 8711 / NCTC 7292 / S-41).